The following is a 97-amino-acid chain: Large ribosomal subunit protein bL27 (97 aa).

A disordered region spans residues Met1–Arg21.

Belongs to the bacterial ribosomal protein bL27 family.

In Gemmatimonas aurantiaca (strain DSM 14586 / JCM 11422 / NBRC 100505 / T-27), this protein is Large ribosomal subunit protein bL27.